A 482-amino-acid polypeptide reads, in one-letter code: tRNA sulfurtransferase (482 aa).

A THUMP domain is found at glutamine 61–histidine 165. ATP-binding positions include leucine 183 to isoleucine 184, lysine 265, glycine 287, and glutamine 296. Cysteine 344 and cysteine 456 are joined by a disulfide. Residues isoleucine 404 to proline 482 form the Rhodanese domain. Catalysis depends on cysteine 456, which acts as the Cysteine persulfide intermediate.

The protein belongs to the ThiI family.

It localises to the cytoplasm. It carries out the reaction [ThiI sulfur-carrier protein]-S-sulfanyl-L-cysteine + a uridine in tRNA + 2 reduced [2Fe-2S]-[ferredoxin] + ATP + H(+) = [ThiI sulfur-carrier protein]-L-cysteine + a 4-thiouridine in tRNA + 2 oxidized [2Fe-2S]-[ferredoxin] + AMP + diphosphate. The catalysed reaction is [ThiS sulfur-carrier protein]-C-terminal Gly-Gly-AMP + S-sulfanyl-L-cysteinyl-[cysteine desulfurase] + AH2 = [ThiS sulfur-carrier protein]-C-terminal-Gly-aminoethanethioate + L-cysteinyl-[cysteine desulfurase] + A + AMP + 2 H(+). Its pathway is cofactor biosynthesis; thiamine diphosphate biosynthesis. In terms of biological role, catalyzes the ATP-dependent transfer of a sulfur to tRNA to produce 4-thiouridine in position 8 of tRNAs, which functions as a near-UV photosensor. Also catalyzes the transfer of sulfur to the sulfur carrier protein ThiS, forming ThiS-thiocarboxylate. This is a step in the synthesis of thiazole, in the thiamine biosynthesis pathway. The sulfur is donated as persulfide by IscS. The polypeptide is tRNA sulfurtransferase (Vibrio vulnificus (strain YJ016)).